The chain runs to 206 residues: Platelet glycoprotein Ib beta chain (206 aa).

Residues 1 to 26 form the signal peptide; sequence MGSRPRGALSLLLLLLAPPSRPASGC. 2 disulfide bridges follow: C26–C32 and C30–C39. The 29-residue stretch at 27–55 folds into the LRRNT domain; it reads PAPCRCSETRVDCGRRGLTWASLPAAFPP. Topologically, residues 27–150 are extracellular; that stretch reads PAPCRCSETR…CAPGLLCWGA (124 aa). Residues 60 to 83 form an LRR repeat; it reads LVLTDNNLTALPPGLLDTLPALRR. The LRRCT domain occupies 89 to 143; the sequence is NPWRCDCRLLPLRAWLAGRPEREFYRDLRCVAPLALRGRLLPYVAEDELRAACAP. 2 disulfide bridges follow: C93–C118 and C95–C141. The helical transmembrane segment at 151-171 threads the bilayer; sequence LVAQLALLVLGLLHALLLALL. Residues 172 to 206 are Cytoplasmic-facing; that stretch reads LSRLRRLRAQARARSTREFSLTAPLVAESAGGGAS. Phosphoserine is present on S186. Position 191 is a phosphoserine; by PKA (S191). T193 carries the phosphothreonine modification. S200 bears the Phosphoserine mark.

Two GP-Ib beta are disulfide-linked to one GP-Ib alpha. GP-IX is complexed with the GP-Ib heterodimer via a non covalent linkage. Interacts with TRAF4.

It localises to the membrane. In terms of biological role, gp-Ib, a surface membrane protein of platelets, participates in the formation of platelet plugs by binding to von Willebrand factor, which is already bound to the subendothelium. The chain is Platelet glycoprotein Ib beta chain (Gp1bb) from Rattus norvegicus (Rat).